A 407-amino-acid polypeptide reads, in one-letter code: S-adenosylmethionine synthase (407 aa).

140 to 145 contacts ATP; sequence GQGSAD.

Belongs to the AdoMet synthase 2 family. Mg(2+) is required as a cofactor.

It catalyses the reaction L-methionine + ATP + H2O = S-adenosyl-L-methionine + phosphate + diphosphate. The protein operates within amino-acid biosynthesis; S-adenosyl-L-methionine biosynthesis; S-adenosyl-L-methionine from L-methionine: step 1/1. In terms of biological role, catalyzes the formation of S-adenosylmethionine from methionine and ATP. This Methanosphaera stadtmanae (strain ATCC 43021 / DSM 3091 / JCM 11832 / MCB-3) protein is S-adenosylmethionine synthase.